The sequence spans 253 residues: Hydroxyacylglutathione hydrolase (253 aa).

Zn(2+)-binding residues include histidine 59, histidine 61, aspartate 63, histidine 64, histidine 118, aspartate 143, and histidine 181.

It belongs to the metallo-beta-lactamase superfamily. Glyoxalase II family. As to quaternary structure, monomer. Zn(2+) serves as cofactor.

It carries out the reaction an S-(2-hydroxyacyl)glutathione + H2O = a 2-hydroxy carboxylate + glutathione + H(+). Its pathway is secondary metabolite metabolism; methylglyoxal degradation; (R)-lactate from methylglyoxal: step 2/2. In terms of biological role, thiolesterase that catalyzes the hydrolysis of S-D-lactoyl-glutathione to form glutathione and D-lactic acid. In Prochlorococcus marinus (strain SARG / CCMP1375 / SS120), this protein is Hydroxyacylglutathione hydrolase.